Consider the following 707-residue polypeptide: Nucleolin 2 (707 aa).

Positions 1–446 (MGKSSKKSAV…TPASNQNQAT (446 aa)) are disordered. Basic and acidic residues-rich tracts occupy residues 30–40 (RNAEDEIEKAV) and 47–60 (TVRE…EEAK). Composition is skewed to acidic residues over residues 75–85 (SSEEDSSESEE), 108–120 (SSDD…SSDD), and 144–153 (DSSDESLSDD). The span at 158–170 (KPAAPLKKPVALA) shows a compositional bias: low complexity. Acidic residues-rich tracts occupy residues 219–232 (DSSD…SDED), 248–263 (SESS…DDEA), and 271–287 (ESSD…SDSD). Residues 300-311 (LTKDTKKGQSKD) are compositionally biased toward basic and acidic residues. Positions 312 to 326 (ESEDSSDESSEESGD) are enriched in acidic residues. Over residues 336–347 (STTSGTTKPSPK) the composition is skewed to low complexity. Positions 355-370 (SDDESDEDDSSDESSD) are enriched in acidic residues. The span at 376–394 (KQTQAKKQAPVAQESSSSD) shows a compositional bias: low complexity. A compositionally biased stretch (acidic residues) spans 395 to 406 (ESSEEDSDMESD). Residues 407–417 (EPAKTPQKKET) show a composition bias toward basic and acidic residues. Residues 420-429 (SVGSNKSATK) are compositionally biased toward polar residues. One can recognise an RRM 1 domain in the interval 449–525 (KTLFVGNLPY…RPVRLDLARE (77 aa)). 2 disordered regions span residues 527 to 546 (GAYT…PAQS) and 629 to 707 (RPRP…GDDD). The RRM 2 domain occupies 549–630 (NTIFIKGFDT…YSLYVDEARP (82 aa)). Over residues 657–681 (GRGDGSRGRGDRGRGRGFGRGDRGH) the composition is skewed to basic and acidic residues.

It is found in the nucleus. The protein resides in the nucleolus. In terms of biological role, involved in pre-rRNA processing and ribosome assembly. This Oryza sativa subsp. japonica (Rice) protein is Nucleolin 2.